The primary structure comprises 471 residues: MPN domain-containing protein (471 aa).

The segment covering 1–10 has biased composition (low complexity); sequence MAAPEPLSPA. Residues 1–63 are disordered; it reads MAAPEPLSPA…GGGGAGAGGC (63 aa). An N-acetylalanine modification is found at A2. A Phosphoserine modification is found at S8. Residues 16-29 show a composition bias toward acidic residues; it reads EAPEEDEDEAEAED. Residues 36–63 show a composition bias toward gly residues; sequence GAGGGRSGGGGSSVSGGGGGGGAGAGGC. The 96-residue stretch at 71–166 folds into the RAMA domain; sequence TRRAVTLRVL…KYKATWLRLH (96 aa). DNA is bound by residues S123, S125, and W145. The interval 170 to 229 is disordered; that stretch reads TPATAADESPASEGEEEELLMEEEEEDVLAGVSAEDKSRRPLGKSPSEPAHPEATTPGKR. A phosphoserine mark is found at S178 and S181. Positions 182–197 are enriched in acidic residues; it reads EGEEEELLMEEEEEDV. The region spanning 272 to 407 is the MPN domain; the sequence is VAVSSNVLFL…PESKISPFWV (136 aa). Zn(2+)-binding residues include H349, H351, and D362. The JAMM motif signature appears at 349–362; sequence HSHPHSPALPSLQD.

The protein belongs to the peptidase M67 family. In terms of assembly, monomer. Mainly monomoric, but when binds to dsDNA, forms homotetramer assembled into two homodimers. May interact with histones; this interaction is facilitated by dsDNA binding. Degraded following binding to N(6)-methyladenosine methylated DNA (m6A).

Its function is as follows. Probable protease. Acts as a sensor of N(6)-methyladenosine methylation on DNA (m6A): recognizes and binds m6A DNA, leading to its degradation. Binds only double strand DNA (dsDNA) in a sequence-independent manner. The chain is MPN domain-containing protein from Homo sapiens (Human).